The sequence spans 352 residues: Phosphate acyltransferase (352 aa).

The protein belongs to the PlsX family. As to quaternary structure, homodimer. Probably interacts with PlsY.

Its subcellular location is the cytoplasm. It catalyses the reaction a fatty acyl-[ACP] + phosphate = an acyl phosphate + holo-[ACP]. Its pathway is lipid metabolism; phospholipid metabolism. Functionally, catalyzes the reversible formation of acyl-phosphate (acyl-PO(4)) from acyl-[acyl-carrier-protein] (acyl-ACP). This enzyme utilizes acyl-ACP as fatty acyl donor, but not acyl-CoA. The sequence is that of Phosphate acyltransferase from Bordetella bronchiseptica (strain ATCC BAA-588 / NCTC 13252 / RB50) (Alcaligenes bronchisepticus).